Consider the following 104-residue polypeptide: NADH-quinone oxidoreductase subunit K (104 aa).

3 helical membrane passes run 4–24 (VPAS…LFGA), 31–51 (VIVL…LVAF), and 67–87 (LFTM…LIAL).

It belongs to the complex I subunit 4L family. In terms of assembly, NDH-1 is composed of 14 different subunits. Subunits NuoA, H, J, K, L, M, N constitute the membrane sector of the complex.

Its subcellular location is the cell membrane. It carries out the reaction a quinone + NADH + 5 H(+)(in) = a quinol + NAD(+) + 4 H(+)(out). Functionally, NDH-1 shuttles electrons from NADH, via FMN and iron-sulfur (Fe-S) centers, to quinones in the respiratory chain. The immediate electron acceptor for the enzyme in this species is believed to be a menaquinone. Couples the redox reaction to proton translocation (for every two electrons transferred, four hydrogen ions are translocated across the cytoplasmic membrane), and thus conserves the redox energy in a proton gradient. The chain is NADH-quinone oxidoreductase subunit K from Bacillus mycoides (strain KBAB4) (Bacillus weihenstephanensis).